Reading from the N-terminus, the 499-residue chain is MRYSFCMLEKTNIPLIRALNLTLVSLCFAMLPNPVHADSLPERIDLFVSLFDYNSATTSYDIRSIQTDFPTRLLTPDSMLPQTSEYPLKDIQLLYKLAQSCTGKLPLSPLITEPLVFTRSLCKGSSLSPRWFARSGLIHPGGGTYAFRYAEKYPAQFANLLPYMHIQERPNAAEGTLLYHLQNMGEDAINALVSGASMFGSGSDLWLRKGDIYYLFNEETWLTNANKAGLSYSLLSADNTCFIQRGNICWDVEDHSDLLRTSMIILVIANIFLVLGWSGYRWNSKRQEMRSRMLILQILTHELRTPIASLSLTVEGFRREFEHLPESLYDEFRRLCEDSRRLRQLAEASKDYLQSDSKPLASDWVPSVEEWLQYKVEEEFSGNVTLKLNQDIAAKLNVYWLGTCVDNLLRNAVKYGVAPVTLEVITQTNLVTFKVTDQGSLTHRDWRHLRKPFVSKSGLGLGLTIVESMVGRMGGKMSLEGPPTTFILEIPCETDTASR.

Over 1–12 (MRYSFCMLEKTN) the chain is Cytoplasmic. The helical transmembrane segment at 13–31 (IPLIRALNLTLVSLCFAML) threads the bilayer. At 32 to 257 (PNPVHADSLP…ICWDVEDHSD (226 aa)) the chain is on the periplasmic side. 2 disulfide bridges follow: Cys-101–Cys-122 and Cys-241–Cys-249. A helical membrane pass occupies residues 258-280 (LLRTSMIILVIANIFLVLGWSGY). Topologically, residues 281–499 (RWNSKRQEMR…IPCETDTASR (219 aa)) are cytoplasmic. One can recognise a Histidine kinase domain in the interval 298–494 (ILTHELRTPI…TFILEIPCET (197 aa)). His-301 carries the phosphohistidine; by autocatalysis modification.

In terms of assembly, homodimer. Autophosphorylated. Contains two disulfide bonds that may play a role in the stability of the protein. However, the disulfide bonds are not absolutely essential, as some activity and growth are detected in the absence of each disulfide bond.

It is found in the cell inner membrane. It carries out the reaction ATP + protein L-histidine = ADP + protein N-phospho-L-histidine.. Its function is as follows. Member of the two-component regulatory system VxrB/VxrA involved in the regulation of diverses processes, including virulence, the type VI secretion system (T6SS) and biofilm formation. Functions as a sensor protein kinase which is autophosphorylated at a histidine residue and transfers its phosphate group to the conserved aspartic acid residue in the regulatory domain of VxrB. Is critical for colonization in the infant mouse model. Contributes to the resistance to beta-lactam treatment. In Vibrio cholerae serotype O1 (strain ATCC 39315 / El Tor Inaba N16961), this protein is Sensor histidine kinase VxrA.